Consider the following 655-residue polypeptide: Ubiquilin-3 (655 aa).

The Ubiquitin-like domain occupies 22–98; the sequence is IKVTVKTPKD…LVIKRQHRAM (77 aa). The segment at 102–124 is disordered; it reads CPAASVPTQGPSPGSLPQPSSIY. Low complexity predominate over residues 110–122; it reads QGPSPGSLPQPSS. Residues 194 to 233 form the STI1 domain; that stretch reads NPHMQQLIQHNPEIGHILNNPEIMRQTLEFLRNPAMMQEM. 3 disordered regions span residues 277–330, 364–399, and 412–447; these read PFAT…PDIR, ASAL…LPEE, and FLRY…LVSG. A compositionally biased stretch (low complexity) spans 279–290; sequence ATATTDNATTTT. The span at 318 to 330 shows a compositional bias: basic and acidic residues; it reads GRQDGDQDAPDIR. Residues 377–395 show a composition bias toward low complexity; sequence VNRVPPSSPSSQEPGSGQP. A compositionally biased stretch (polar residues) spans 432-441; the sequence is KSSTGHSTNL. The region spanning 609–655 is the UBA domain; that stretch reads QLQPEAHFQVQLEQLRSMGFLNREANLQALIATGGDVDAAVEKLRQS.

In terms of tissue distribution, testis specific.

In Homo sapiens (Human), this protein is Ubiquilin-3 (UBQLN3).